The chain runs to 423 residues: Pre-mRNA-splicing regulator WTAP (423 aa).

The disordered stretch occupies residues glutamine 234 to leucine 423. Polar residues-rich tracts occupy residues methionine 239–valine 276, asparagine 285–serine 301, aspartate 358–asparagine 377, and threonine 392–aspartate 404. The span at serine 405–leucine 423 shows a compositional bias: low complexity.

It belongs to the fl(2)d family. In terms of assembly, component of the WMM complex, a N6-methyltransferase complex composed of a catalytic subcomplex, named MAC, and of an associated subcomplex, named MACOM. Component of the MACOM subcomplex.

The protein resides in the nucleus speckle. It is found in the nucleus. The protein localises to the nucleoplasm. Associated component of the WMM complex, a complex that mediates N6-methyladenosine (m6A) methylation of RNAs, a modification that plays a role in the efficiency of mRNA splicing and RNA processing. The chain is Pre-mRNA-splicing regulator WTAP from Danio rerio (Zebrafish).